Reading from the N-terminus, the 322-residue chain is Ferrochelatase (322 aa).

The Fe cation site is built by H194 and E275.

This sequence belongs to the ferrochelatase family.

The protein localises to the cytoplasm. It carries out the reaction heme b + 2 H(+) = protoporphyrin IX + Fe(2+). It participates in porphyrin-containing compound metabolism; protoheme biosynthesis; protoheme from protoporphyrin-IX: step 1/1. Catalyzes the ferrous insertion into protoporphyrin IX. The chain is Ferrochelatase from Yersinia enterocolitica.